Here is a 128-residue protein sequence, read N- to C-terminus: Iron-sulfur cluster insertion protein ErpA (128 aa).

The iron-sulfur cluster site is built by Cys-56, Cys-120, and Cys-122.

Belongs to the HesB/IscA family. Homodimer. Requires iron-sulfur cluster as cofactor.

In terms of biological role, required for insertion of 4Fe-4S clusters for at least IspG. This chain is Iron-sulfur cluster insertion protein ErpA, found in Xylella fastidiosa (strain M12).